We begin with the raw amino-acid sequence, 119 residues long: MQGQAGKRKTDGKVPSNTEQNCPDLFERPRLVCIMQAPLVQMRTVPSETGHFPKIISLNRSCSRSYLLSMPHTQLPYPLPYGEFPRCSTVRRDHNFPCTLYSAPGVVHPRLCVFSCMMI.

Residues 1–22 are disordered; that stretch reads MQGQAGKRKTDGKVPSNTEQNC.

This is an uncharacterized protein from Saccharomyces cerevisiae (strain ATCC 204508 / S288c) (Baker's yeast).